We begin with the raw amino-acid sequence, 412 residues long: Alpha-1-antiproteinase (412 aa).

An N-terminal signal peptide occupies residues 1 to 24; it reads MTPSISWGLLLLAGLFCLVPSFLA. At S33 the chain carries Phosphoserine. 4 N-linked (GlcNAc...) asparagine glycosylation sites follow: N100, N133, N264, and N313. Residues 367 to 386 are RCL; the sequence is AATVLQAVPMSMPPILNFNK. Phosphoserine is present on S377.

This sequence belongs to the serpin family. As to quaternary structure, interacts with CELA2A. Interacts with ERGIC3 and LMAN1/ERGIC53. Interacts with PRSS1/Trypsin. Expressed not only in liver but also in kidney tubule cells, where it is regulated by androgens during development.

The protein localises to the secreted. Functionally, inhibitor of serine proteases. Its primary target is elastase, but it also has a moderate affinity for plasmin and thrombin. This is Alpha-1-antiproteinase (Serpina1) from Mus caroli (Ryukyu mouse).